A 231-amino-acid polypeptide reads, in one-letter code: Ion-translocating oxidoreductase complex subunit E (231 aa).

A run of 6 helical transmembrane segments spans residues 18–38, 39–59, 63–83, 86–106, 125–145, and 182–202; these read ALVQ…ATNA, LGLG…ISTL, TPAE…VSAV, LINA…PLIV, ALSA…MFVL, and PFLL…MLAG.

The protein belongs to the NqrDE/RnfAE family. As to quaternary structure, the complex is composed of six subunits: RsxA, RsxB, RsxC, RsxD, RsxE and RsxG.

It is found in the cell inner membrane. Its function is as follows. Part of a membrane-bound complex that couples electron transfer with translocation of ions across the membrane. Required to maintain the reduced state of SoxR. The sequence is that of Ion-translocating oxidoreductase complex subunit E from Escherichia coli (strain ATCC 8739 / DSM 1576 / NBRC 3972 / NCIMB 8545 / WDCM 00012 / Crooks).